Here is a 279-residue protein sequence, read N- to C-terminus: Tumor protein p63-regulated gene 1 protein (279 aa).

The disordered stretch occupies residues 1–49 (MSTIGSFDGFQPVSLKQEEEDQPSENDHLSTKEGNSGKDPGSRRISRQQ). One can recognise a hSac2 domain in the interval 72-259 (VTRPGAIETA…ILIETYTGLM (188 aa)).

It belongs to the TPRG1 family. Highly expressed in skin. Also detected at low levels in tongue and esophagus.

It localises to the cytoplasm. The chain is Tumor protein p63-regulated gene 1 protein from Mus musculus (Mouse).